The sequence spans 527 residues: Ribonuclease Y (527 aa).

The chain crosses the membrane as a helical span at residues 21 to 41 (ILAIFFSFIIGIVFGGMALFV). The segment at 78–97 (READKTRNSAETELKERRSE) is disordered. In terms of domain architecture, KH spans 217 to 302 (TTNVVPLPSD…EVVTKAKEEV (86 aa)). The 94-residue stretch at 343–436 (VLQHSIEVAQ…VSAADAISSA (94 aa)) folds into the HD domain.

Belongs to the RNase Y family.

Its subcellular location is the cell membrane. Functionally, endoribonuclease that initiates mRNA decay. In Dehalococcoides mccartyi (strain ATCC BAA-2100 / JCM 16839 / KCTC 5957 / BAV1), this protein is Ribonuclease Y.